The chain runs to 724 residues: uncharacterized protein (724 aa).

Disordered stretches follow at residues 1-23 (MEDR…IPDN), 166-477 (PDGY…PPRD), 496-517 (EAHD…AHGP), and 532-691 (DHPI…PALS). Polar residues-rich tracts occupy residues 227–245 (VSQS…TVNQ) and 270–296 (STTL…TSDA). Over residues 304-322 (TRDHDRYGNGRGPDTDRLE) the composition is skewed to basic and acidic residues. A compositionally biased stretch (polar residues) spans 403-413 (PSSSHSETPNM). Composition is skewed to basic and acidic residues over residues 550–560 (RNHEFTEDKRL) and 637–657 (LRHD…DLAA). The span at 682-691 (RLAAASPALS) shows a compositional bias: low complexity.

This is an uncharacterized protein from Neurospora crassa (strain ATCC 24698 / 74-OR23-1A / CBS 708.71 / DSM 1257 / FGSC 987).